The following is a 294-amino-acid chain: Putative ribose uptake protein RbsU (294 aa).

10 helical membrane-spanning segments follow: residues 2–24 (NAVN…VIVG), 34–56 (ILGT…GTPI), 63–82 (IFCL…TFHV), 92–114 (MPIT…LGNW), 121–140 (LIGF…TAWS), 150–172 (GAVK…SAFP), 179–198 (GFQG…IIFG), 218–235 (IFSG…LISA), 242–264 (LATG…IYIL), and 274–293 (IAVM…TAFI).

This sequence belongs to the GRP transporter (TC 2.A.7.5) family.

The protein localises to the cell membrane. Functionally, could be involved in the uptake of ribose. This Latilactobacillus sakei subsp. sakei (strain 23K) (Lactobacillus sakei subsp. sakei) protein is Putative ribose uptake protein RbsU (rbsU).